We begin with the raw amino-acid sequence, 171 residues long: Crossover junction endodeoxyribonuclease RuvC (171 aa).

Residues D12, E72, and D144 contribute to the active site. D12, E72, and D144 together coordinate Mg(2+).

This sequence belongs to the RuvC family. In terms of assembly, homodimer which binds Holliday junction (HJ) DNA. The HJ becomes 2-fold symmetrical on binding to RuvC with unstacked arms; it has a different conformation from HJ DNA in complex with RuvA. In the full resolvosome a probable DNA-RuvA(4)-RuvB(12)-RuvC(2) complex forms which resolves the HJ. Requires Mg(2+) as cofactor.

It is found in the cytoplasm. The enzyme catalyses Endonucleolytic cleavage at a junction such as a reciprocal single-stranded crossover between two homologous DNA duplexes (Holliday junction).. In terms of biological role, the RuvA-RuvB-RuvC complex processes Holliday junction (HJ) DNA during genetic recombination and DNA repair. Endonuclease that resolves HJ intermediates. Cleaves cruciform DNA by making single-stranded nicks across the HJ at symmetrical positions within the homologous arms, yielding a 5'-phosphate and a 3'-hydroxyl group; requires a central core of homology in the junction. The consensus cleavage sequence is 5'-(A/T)TT(C/G)-3'. Cleavage occurs on the 3'-side of the TT dinucleotide at the point of strand exchange. HJ branch migration catalyzed by RuvA-RuvB allows RuvC to scan DNA until it finds its consensus sequence, where it cleaves and resolves the cruciform DNA. The sequence is that of Crossover junction endodeoxyribonuclease RuvC from Afipia carboxidovorans (strain ATCC 49405 / DSM 1227 / KCTC 32145 / OM5) (Oligotropha carboxidovorans).